Here is a 171-residue protein sequence, read N- to C-terminus: Large ribosomal subunit protein bL21 (171 aa).

The interval 144 to 171 is disordered; sequence AAPAKAEAAPKKKAAPKKAAAKTEEGEA. The segment covering 154–163 has biased composition (basic residues); that stretch reads KKKAAPKKAA.

Belongs to the bacterial ribosomal protein bL21 family. As to quaternary structure, part of the 50S ribosomal subunit. Contacts protein L20.

Its function is as follows. This protein binds to 23S rRNA in the presence of protein L20. This Caulobacter vibrioides (strain ATCC 19089 / CIP 103742 / CB 15) (Caulobacter crescentus) protein is Large ribosomal subunit protein bL21.